The chain runs to 403 residues: Cysteine desulfurase IscS (403 aa).

Pyridoxal 5'-phosphate contacts are provided by residues 73–74 (AT), N153, Q181, and 201–203 (SAH). K204 is subject to N6-(pyridoxal phosphate)lysine. T241 provides a ligand contact to pyridoxal 5'-phosphate. C326 acts as the Cysteine persulfide intermediate in catalysis. C326 contributes to the [2Fe-2S] cluster binding site.

The protein belongs to the class-V pyridoxal-phosphate-dependent aminotransferase family. NifS/IscS subfamily. Homodimer. Forms a heterotetramer with IscU, interacts with other sulfur acceptors. It depends on pyridoxal 5'-phosphate as a cofactor.

The protein localises to the cytoplasm. The enzyme catalyses (sulfur carrier)-H + L-cysteine = (sulfur carrier)-SH + L-alanine. It functions in the pathway cofactor biosynthesis; iron-sulfur cluster biosynthesis. Its function is as follows. Master enzyme that delivers sulfur to a number of partners involved in Fe-S cluster assembly, tRNA modification or cofactor biosynthesis. Catalyzes the removal of elemental sulfur atoms from cysteine to produce alanine. Functions as a sulfur delivery protein for Fe-S cluster synthesis onto IscU, an Fe-S scaffold assembly protein, as well as other S acceptor proteins. This Methylococcus capsulatus (strain ATCC 33009 / NCIMB 11132 / Bath) protein is Cysteine desulfurase IscS.